The chain runs to 146 residues: Large ribosomal subunit protein uL13 (146 aa).

This sequence belongs to the universal ribosomal protein uL13 family. In terms of assembly, part of the 50S ribosomal subunit.

Its function is as follows. This protein is one of the early assembly proteins of the 50S ribosomal subunit, although it is not seen to bind rRNA by itself. It is important during the early stages of 50S assembly. This Mycoplasma genitalium (strain ATCC 33530 / DSM 19775 / NCTC 10195 / G37) (Mycoplasmoides genitalium) protein is Large ribosomal subunit protein uL13.